The sequence spans 296 residues: MHFQDIISTLQRFWADQGCLLLQPYDTEKGAGTMSPHTVLRAIGPEPWAVAYPEPCRRPTDGRYGDNPNRAQHYFQFQVLIKPSPDGIQETYLASLAALGIKAADHDIRFVEDNWESPTLGAWGVGWEVWLDGMEVTQFTYFQQCGGIDCKPVSIEITYGLERLATYLQDVESIWDLSWNAERNYGDIWLPFEKGQCHFNFEGSDPERLKQLFAIYEAEASDLIEKKLPAPALDFVLKCSHTFNLLEARGVISVTERTATIGRIRTLARRVAEAWLAEREALGFPLLEGGTLPSAA.

It belongs to the class-II aminoacyl-tRNA synthetase family. As to quaternary structure, tetramer of two alpha and two beta subunits.

The protein localises to the cytoplasm. The enzyme catalyses tRNA(Gly) + glycine + ATP = glycyl-tRNA(Gly) + AMP + diphosphate. This is Glycine--tRNA ligase alpha subunit from Parasynechococcus marenigrum (strain WH8102).